A 307-amino-acid chain; its full sequence is Retron Ec86 putative ribosyltransferase/DNA-binding protein (307 aa).

Its function is as follows. Possible ribosyltransferase/DNA-binding component of antiviral defense system retron Ec86, composed of a non-coding RNA (ncRNA), a ribosyltransferase/DNA-binding protein and a reverse transcriptase (RT). Expression of the 3-gene retron confers protection against bacteriophages T5. At multiplicity of infection (MOI) of 0.02 cultures grow normally when infected with T5 without collapsing, at MOI 2 cultures enter growth stasis. The protein is Retron Ec86 putative ribosyltransferase/DNA-binding protein of Escherichia coli.